The sequence spans 120 residues: NAD(P)H-quinone oxidoreductase subunit 3, chloroplastic (120 aa).

Transmembrane regions (helical) follow at residues leucine 14 to isoleucine 34, methionine 64 to methionine 84, and valine 88 to serine 108.

This sequence belongs to the complex I subunit 3 family. NDH is composed of at least 16 different subunits, 5 of which are encoded in the nucleus.

The protein localises to the plastid. It is found in the chloroplast thylakoid membrane. The catalysed reaction is a plastoquinone + NADH + (n+1) H(+)(in) = a plastoquinol + NAD(+) + n H(+)(out). It carries out the reaction a plastoquinone + NADPH + (n+1) H(+)(in) = a plastoquinol + NADP(+) + n H(+)(out). Its function is as follows. NDH shuttles electrons from NAD(P)H:plastoquinone, via FMN and iron-sulfur (Fe-S) centers, to quinones in the photosynthetic chain and possibly in a chloroplast respiratory chain. The immediate electron acceptor for the enzyme in this species is believed to be plastoquinone. Couples the redox reaction to proton translocation, and thus conserves the redox energy in a proton gradient. In Cicer arietinum (Chickpea), this protein is NAD(P)H-quinone oxidoreductase subunit 3, chloroplastic.